The following is a 52-amino-acid chain: Small ribosomal subunit protein uS14 (52 aa).

Residues C17, C20, C35, and C38 each contribute to the Zn(2+) site.

The protein belongs to the universal ribosomal protein uS14 family. Zinc-binding uS14 subfamily. Part of the 30S ribosomal subunit. The cofactor is Zn(2+).

Functionally, binds 16S rRNA, required for the assembly of 30S particles. The polypeptide is Small ribosomal subunit protein uS14 (Halobacterium salinarum (strain ATCC 700922 / JCM 11081 / NRC-1) (Halobacterium halobium)).